The primary structure comprises 620 residues: Arginine--tRNA ligase (620 aa).

Residues 147 to 157 (ANPTGPIHIGG) carry the 'HIGH' region motif.

The protein belongs to the class-I aminoacyl-tRNA synthetase family. As to quaternary structure, monomer.

The protein resides in the cytoplasm. The catalysed reaction is tRNA(Arg) + L-arginine + ATP = L-arginyl-tRNA(Arg) + AMP + diphosphate. This Bifidobacterium longum subsp. infantis (strain ATCC 15697 / DSM 20088 / JCM 1222 / NCTC 11817 / S12) protein is Arginine--tRNA ligase.